Reading from the N-terminus, the 227-residue chain is Orotidine 5'-phosphate decarboxylase (227 aa).

Substrate-binding positions include Asp12, Lys34, 61 to 70 (DLKLHDIPNT), Thr117, Arg178, Gln187, Gly207, and Arg208. Lys63 serves as the catalytic Proton donor.

This sequence belongs to the OMP decarboxylase family. Type 1 subfamily. As to quaternary structure, homodimer.

It catalyses the reaction orotidine 5'-phosphate + H(+) = UMP + CO2. It participates in pyrimidine metabolism; UMP biosynthesis via de novo pathway; UMP from orotate: step 2/2. Catalyzes the decarboxylation of orotidine 5'-monophosphate (OMP) to uridine 5'-monophosphate (UMP). This Anaeromyxobacter sp. (strain K) protein is Orotidine 5'-phosphate decarboxylase.